A 306-amino-acid polypeptide reads, in one-letter code: Ciliary microtubule inner protein 2B (306 aa).

Residues 61-92 form a disordered region; the sequence is QSNPFPPPRDHSFDGGSQELGGRRQHPGDPNL.

It belongs to the CIMIP2 family. As to expression, expressed in airway epithelial cells.

The protein resides in the cytoplasm. It localises to the cytoskeleton. It is found in the cilium axoneme. In terms of biological role, microtubule inner protein (MIP) part of the dynein-decorated doublet microtubules (DMTs) in cilia axoneme, which is required for motile cilia beating. This is Ciliary microtubule inner protein 2B (cimip2b) from Xenopus tropicalis (Western clawed frog).